We begin with the raw amino-acid sequence, 329 residues long: MALSMEFGFSIGSCFKAPNPPVLISASPNKINFTLRRRKKRFLLRVSAVSYKEFAESALEETRKRIVLEPSHLQEKYSSMTGLDGKTELQMLAFKSSKIRLLRSMAIENETMQVFDFAGFMEPEYDTPIFCANFFTSTNVNIVVLDLNPLHQLTDQTDYQDKYYNKIMSIYHKYAETFPWGGKLTGESIKFFSPLVMWTRFSSSKEKHKALFSAFLEYYQAWLEMTIQVREEMEPSHVRANCEAQHKYLTWRAQKDPGHGLLKRLVGEAKAKELLRDFLFNGVDELGTKTFIDYFPEYQTEDGTVSDKRSIIGKSYETRPWDLTGQFIG.

A chloroplast-targeting transit peptide spans 1–45; it reads MALSMEFGFSIGSCFKAPNPPVLISASPNKINFTLRRRKKRFLLR.

Belongs to the HY2 family.

It localises to the plastid. The protein resides in the chloroplast. The catalysed reaction is (3Z)-phytochromobilin + 2 oxidized [2Fe-2S]-[ferredoxin] = biliverdin IXalpha + 2 reduced [2Fe-2S]-[ferredoxin] + 2 H(+). In terms of biological role, catalyzes the two-electron reduction of biliverdin IX-alpha to the tetrapyrrole chromophore phytochromobilin (PPhiB). In Arabidopsis thaliana (Mouse-ear cress), this protein is Phytochromobilin:ferredoxin oxidoreductase, chloroplastic.